The following is a 338-amino-acid chain: GTPase Obg (338 aa).

In terms of domain architecture, Obg spans 1 to 159; that stretch reads MQFIDEVKIH…RWLRLELKLL (159 aa). The 172-residue stretch at 160–331 folds into the OBG-type G domain; that stretch reads ADVGLLGFPN…LLDEIARSLW (172 aa). GTP-binding positions include 166–173, 191–195, 213–216, 283–286, and 312–314; these read GFPNVGKS, FTTLK, DIPG, NKMD, and SAA. Positions 173 and 193 each coordinate Mg(2+).

The protein belongs to the TRAFAC class OBG-HflX-like GTPase superfamily. OBG GTPase family. As to quaternary structure, monomer. It depends on Mg(2+) as a cofactor.

Its subcellular location is the cytoplasm. Functionally, an essential GTPase which binds GTP, GDP and possibly (p)ppGpp with moderate affinity, with high nucleotide exchange rates and a fairly low GTP hydrolysis rate. Plays a role in control of the cell cycle, stress response, ribosome biogenesis and in those bacteria that undergo differentiation, in morphogenesis control. The sequence is that of GTPase Obg from Geobacter sulfurreducens (strain ATCC 51573 / DSM 12127 / PCA).